A 77-amino-acid chain; its full sequence is Translational regulator CsrA (77 aa).

This sequence belongs to the CsrA/RsmA family. As to quaternary structure, homodimer; the beta-strands of each monomer intercalate to form a hydrophobic core, while the alpha-helices form wings that extend away from the core.

It is found in the cytoplasm. A translational regulator that binds mRNA to regulate translation initiation and/or mRNA stability. Usually binds in the 5'-UTR at or near the Shine-Dalgarno sequence preventing ribosome-binding, thus repressing translation. Its main target seems to be the major flagellin gene, while its function is anatagonized by FliW. This is Translational regulator CsrA from Desulfitobacterium hafniense (strain DSM 10664 / DCB-2).